The following is a 667-amino-acid chain: Ribosomal oxygenase 1 (667 aa).

The residue at position 1 (Met-1) is an N-acetylmethionine. The segment covering 1–11 (MDGLRASAGLL) has biased composition (low complexity). The interval 1-99 (MDGLRASAGL…ATGREPHGQL (99 aa)) is disordered. 2 stretches are compositionally biased toward basic residues: residues 12 to 22 (RRGRLRRRRQQ) and 35 to 44 (RPRKIRRQLR). A phosphoserine mark is found at Ser-61, Ser-64, and Ser-108. Residues 322-467 (CSLRLLCPQA…DFLEAVLPLA (146 aa)) form the JmjC domain. Fe cation is bound by residues His-368, Asp-370, and His-433.

The protein belongs to the ROX family. NO66 subfamily. As to quaternary structure, interacts with SP7/OSX; the interaction is direct. Interacts with MYC. Interacts with PHF19; leading to its recruitment to H3K36me3 sites. Fe(2+) is required as a cofactor.

The protein resides in the nucleus. The protein localises to the nucleolus. It is found in the nucleoplasm. The catalysed reaction is N(6),N(6)-dimethyl-L-lysyl(36)-[histone H3] + 2 2-oxoglutarate + 2 O2 = L-lysyl(36)-[histone H3] + 2 formaldehyde + 2 succinate + 2 CO2. The enzyme catalyses N(6)-methyl-L-lysyl-[protein] + 2-oxoglutarate + O2 = L-lysyl-[protein] + formaldehyde + succinate + CO2. It catalyses the reaction L-histidyl-[protein] + 2-oxoglutarate + O2 = (3S)-3-hydroxy-L-histidyl-[protein] + succinate + CO2. Its function is as follows. Oxygenase that can act as both a histone lysine demethylase and a ribosomal histidine hydroxylase. Specifically demethylates 'Lys-4' (H3K4me) and 'Lys-36' (H3K36me) of histone H3, thereby playing a central role in histone code. Preferentially demethylates trimethylated H3 'Lys-4' (H3K4me3) and monomethylated H3 'Lys-4' (H3K4me1) residues, while it has weaker activity for dimethylated H3 'Lys-36' (H3K36me2). Acts as a regulator of osteoblast differentiation via its interaction with SP7/OSX by demethylating H3K4me and H3K36me, thereby inhibiting SP7/OSX-mediated promoter activation. Also catalyzes demethylation of non-histone proteins, such as CGAS: demethylation of monomethylated CGAS promotes interaction between CGAS and PARP1, followed by PARP1 inactivation. Also catalyzes the hydroxylation of 60S ribosomal protein L8 on 'His-216', thereby playing a role in ribosome biogenesis. Participates in MYC-induced transcriptional activation. In Bos taurus (Bovine), this protein is Ribosomal oxygenase 1 (RIOX1).